Reading from the N-terminus, the 93-residue chain is Mitochondrial import inner membrane translocase subunit TIM10 (93 aa).

The interaction with transmembrane regions of transmembrane proteins in transit stretch occupies residues 1–31 (MSFLGFGGGQPQLSSQQKIQAAEAELDLVTD). The Twin CX3C motif motif lies at 40–65 (CYKKCINTSYSEGELNKNESSCLDRC). 2 cysteine pairs are disulfide-bonded: cysteine 40/cysteine 65 and cysteine 44/cysteine 61. The interval 73–93 (NVQVGENMQKMGQSFNAAGKF) is required for heterohexamerization.

It belongs to the small Tim family. In terms of assembly, heterohexamer; composed of 3 copies of TIM9 and 3 copies of TIM10, named soluble 70 kDa complex. Associates directly with the TIM12 component of the TIM22 complex, whose core is composed of TIM18, TIM22 and TIM54. Interacts with the transmembrane regions of multi-pass transmembrane proteins in transit.

It localises to the mitochondrion inner membrane. Its subcellular location is the mitochondrion intermembrane space. Its function is as follows. Mitochondrial intermembrane chaperone that participates in the import and insertion of multi-pass transmembrane proteins into the mitochondrial inner membrane. Also required for the transfer of beta-barrel precursors from the TOM complex to the sorting and assembly machinery (SAM complex) of the outer membrane. Acts as a chaperone-like protein that protects the hydrophobic precursors from aggregation and guide them through the mitochondrial intermembrane space. Compared to TIM9, it may function as a substrate sensor. This chain is Mitochondrial import inner membrane translocase subunit TIM10 (TIM10), found in Saccharomyces cerevisiae (strain ATCC 204508 / S288c) (Baker's yeast).